Consider the following 355-residue polypeptide: 3,4-dihydroxy-2-butanone 4-phosphate synthase (355 aa).

Residues 1-202 (MYHKRIKEAI…VSDIIQYRLN (202 aa)) are DHBP synthase. D-ribulose 5-phosphate is bound by residues 27-28 (RE), Asp-32, 139-143 (RTGHT), and Glu-163. Residue Glu-28 participates in Mg(2+) binding. His-142 contacts Mg(2+). The segment at 203–355 (FENLLREITR…NLHLVEKIEV (153 aa)) is GTP cyclohydrolase II-like.

The protein in the N-terminal section; belongs to the DHBP synthase family. In the C-terminal section; belongs to the GTP cyclohydrolase II family. Mg(2+) is required as a cofactor. Mn(2+) serves as cofactor.

It carries out the reaction D-ribulose 5-phosphate = (2S)-2-hydroxy-3-oxobutyl phosphate + formate + H(+). It participates in cofactor biosynthesis; riboflavin biosynthesis; 2-hydroxy-3-oxobutyl phosphate from D-ribulose 5-phosphate: step 1/1. In terms of biological role, catalyzes the conversion of D-ribulose 5-phosphate to formate and 3,4-dihydroxy-2-butanone 4-phosphate. The polypeptide is 3,4-dihydroxy-2-butanone 4-phosphate synthase (ribB) (Helicobacter hepaticus (strain ATCC 51449 / 3B1)).